A 373-amino-acid chain; its full sequence is Dual-specificity RNA methyltransferase RlmN (373 aa).

Glu94 serves as the catalytic Proton acceptor. One can recognise a Radical SAM core domain in the interval 100–339 (EDDRATLCVS…VIVRKTRGDD (240 aa)). A disulfide bond links Cys107 and Cys344. [4Fe-4S] cluster is bound by residues Cys114, Cys118, and Cys121. S-adenosyl-L-methionine is bound by residues 168–169 (GE), Ser200, 222–224 (SIH), and Asn301. The active-site S-methylcysteine intermediate is Cys344.

It belongs to the radical SAM superfamily. RlmN family. Requires [4Fe-4S] cluster as cofactor.

It is found in the cytoplasm. The catalysed reaction is adenosine(2503) in 23S rRNA + 2 reduced [2Fe-2S]-[ferredoxin] + 2 S-adenosyl-L-methionine = 2-methyladenosine(2503) in 23S rRNA + 5'-deoxyadenosine + L-methionine + 2 oxidized [2Fe-2S]-[ferredoxin] + S-adenosyl-L-homocysteine. The enzyme catalyses adenosine(37) in tRNA + 2 reduced [2Fe-2S]-[ferredoxin] + 2 S-adenosyl-L-methionine = 2-methyladenosine(37) in tRNA + 5'-deoxyadenosine + L-methionine + 2 oxidized [2Fe-2S]-[ferredoxin] + S-adenosyl-L-homocysteine. In terms of biological role, specifically methylates position 2 of adenine 2503 in 23S rRNA and position 2 of adenine 37 in tRNAs. m2A2503 modification seems to play a crucial role in the proofreading step occurring at the peptidyl transferase center and thus would serve to optimize ribosomal fidelity. In Shewanella baltica (strain OS155 / ATCC BAA-1091), this protein is Dual-specificity RNA methyltransferase RlmN.